Here is a 222-residue protein sequence, read N- to C-terminus: Latexin (222 aa).

The Cystatin LXN-type 1 domain occupies 1–97 (MEIPPTHYAA…NFTFEGEIGK (97 aa)). Lysine 55 is modified (N6-acetyllysine). Residues 98–117 (NPDEEDNTFYQSLMSLKRPL) are alpha-helical linker. The Cystatin LXN-type 2 domain maps to 118–222 (EAQDIPDNFG…SRLPKEGQAE (105 aa)).

Belongs to the protease inhibitor I47 (latexin) family. In terms of tissue distribution, highly enriched in macrophages.

The protein localises to the cytoplasm. Its function is as follows. Hardly reversible, non-competitive, and potent inhibitor of CPA1, CPA2 and CPA4. May play a role in inflammation. This Mus musculus (Mouse) protein is Latexin (Lxn).